Here is a 397-residue protein sequence, read N- to C-terminus: Nicotinate phosphoribosyltransferase (397 aa).

Residue histidine 221 is modified to Phosphohistidine; by autocatalysis.

Belongs to the NAPRTase family. Post-translationally, transiently phosphorylated on a His residue during the reaction cycle. Phosphorylation strongly increases the affinity for substrates and increases the rate of nicotinate D-ribonucleotide production. Dephosphorylation regenerates the low-affinity form of the enzyme, leading to product release.

It carries out the reaction nicotinate + 5-phospho-alpha-D-ribose 1-diphosphate + ATP + H2O = nicotinate beta-D-ribonucleotide + ADP + phosphate + diphosphate. Its pathway is cofactor biosynthesis; NAD(+) biosynthesis; nicotinate D-ribonucleotide from nicotinate: step 1/1. Its function is as follows. Catalyzes the synthesis of beta-nicotinate D-ribonucleotide from nicotinate and 5-phospho-D-ribose 1-phosphate at the expense of ATP. This Herminiimonas arsenicoxydans protein is Nicotinate phosphoribosyltransferase.